Here is a 375-residue protein sequence, read N- to C-terminus: FK506-binding protein 4 (375 aa).

Disordered regions lie at residues Gly-55–Ile-78 and Pro-127–Thr-265. 2 stretches are compositionally biased toward acidic residues: residues Phe-56–Glu-66 and Phe-131–Arg-173. Residues Asp-196–Ala-216 are compositionally biased toward basic and acidic residues. Over residues Asp-217–Ala-230 the composition is skewed to low complexity. Basic and acidic residues predominate over residues Ile-231–Thr-261. A PPIase FKBP-type domain is found at Gly-289–Lys-375.

It belongs to the FKBP-type PPIase family. FKBP3/4 subfamily. Binds to histones H3 and H4.

Its subcellular location is the nucleus. The catalysed reaction is [protein]-peptidylproline (omega=180) = [protein]-peptidylproline (omega=0). With respect to regulation, inhibited by both FK506 and rapamycin. PPIase that acts as a histone chaperone. Histone proline isomerase that increases the rate of cis-trans isomerization at prolines on the histone H3 N-terminal tail. Proline isomerization influences H3 methylation thereby regulating gene expression. The chain is FK506-binding protein 4 (FPR4) from Mycosarcoma maydis (Corn smut fungus).